Consider the following 145-residue polypeptide: Leghemoglobin-2 (145 aa).

The 143-residue stretch at 3-145 folds into the Globin domain; the sequence is AFSDKQEGLV…ELAAAIKKAY (143 aa). Tyrosine 26 and tyrosine 31 each carry nitrated tyrosine. Serine 46 contributes to the heme b binding site. Serine 46 bears the Phosphoserine mark. Histidine 62 serves as a coordination point for O2. Heme b-binding residues include lysine 65, histidine 93, and lysine 96. Tyrosine 134 carries the nitrated tyrosine modification.

It belongs to the plant globin family. As to quaternary structure, monomer. In terms of processing, nitrated in effective nodules and particularly in hypoxic conditions; this mechanism may play a protective role in the symbiosis by buffering toxic peroxynitrite NO(2)(-). Nitration level decrease during nodule senescence. Phosphorylation at Ser-46 disrupts the molecular environment of its porphyrin ring oxygen binding pocket, thus leading to a reduced oxygen consumption and to the delivery of oxygen O(2) to symbiosomes. As to expression, root nodules.

The protein localises to the cytoplasm. It is found in the cytosol. The protein resides in the nucleus. Functionally, leghemoglobin that reversibly binds oxygen O(2) through a pentacoordinated heme iron. In root nodules, facilitates the diffusion of oxygen to the bacteroids while preventing the bacterial nitrogenase from being inactivated by buffering dioxygen, nitric oxide and carbon monoxide, and promoting the formation of reactive oxygen species (ROS, e.g. H(2)O(2)). This role is essential for symbiotic nitrogen fixation (SNF). The protein is Leghemoglobin-2 of Vigna unguiculata (Cowpea).